The following is a 491-amino-acid chain: Peptidyl-prolyl isomerase CWC27 (491 aa).

Positions 11 to 167 (TNGKVIIDTT…IPPKIRRIHI (157 aa)) constitute a PPIase cyclophilin-type domain. Composition is skewed to basic and acidic residues over residues 186-202 (AQQK…EQRE), 268-298 (DLGK…REKA), and 306-316 (AEIKRMEEDLR). 2 disordered regions span residues 186–427 (AQQK…IEVD) and 464–491 (RDLL…GRNR). Residues 277–327 (ASEEKKAVDLKNIRAQHEREKAGGSAARQAEIKRMEEDLRRLKKRSGSVSD) are a coiled coil. Residues 323–333 (GSVSDSESDSS) show a composition bias toward low complexity. A compositionally biased stretch (basic residues) spans 352 to 367 (ASKRGRAAMKAGNKRG). Acidic residues-rich tracts occupy residues 391-406 (DEPE…EGEA) and 418-427 (AEEEGGIEVD). Positions 482–491 (RTVRNSGRNR) are enriched in basic residues.

It belongs to the cyclophilin-type PPIase family. CWC27 subfamily. As to quaternary structure, associated with the spliceosome.

Its subcellular location is the cytoplasm. The protein resides in the nucleus. It carries out the reaction [protein]-peptidylproline (omega=180) = [protein]-peptidylproline (omega=0). Functionally, PPIases accelerate the folding of proteins. It catalyzes the cis-trans isomerization of proline imidic peptide bonds in oligopeptides. Involved in pre-mRNA splicing. This chain is Peptidyl-prolyl isomerase CWC27 (CWC27), found in Cryptococcus neoformans var. neoformans serotype D (strain B-3501A) (Filobasidiella neoformans).